We begin with the raw amino-acid sequence, 235 residues long: Small ribosomal subunit protein uS2c (235 aa).

This sequence belongs to the universal ribosomal protein uS2 family.

The protein resides in the plastid. Its subcellular location is the chloroplast. The sequence is that of Small ribosomal subunit protein uS2c (rps2) from Huperzia lucidula (Shining clubmoss).